The chain runs to 117 residues: UPF0342 protein LEUM_1212 (117 aa).

The protein belongs to the UPF0342 family.

The sequence is that of UPF0342 protein LEUM_1212 from Leuconostoc mesenteroides subsp. mesenteroides (strain ATCC 8293 / DSM 20343 / BCRC 11652 / CCM 1803 / JCM 6124 / NCDO 523 / NBRC 100496 / NCIMB 8023 / NCTC 12954 / NRRL B-1118 / 37Y).